Consider the following 64-residue polypeptide: Conotoxin Ts-011 (64 aa).

An N-terminal signal peptide occupies residues 1-22 (MHCLPVLVILLLLIASTPSVDA). A propeptide spanning residues 23–52 (RPKTKDDVPPASFHGADDANRILQTLWNLR) is cleaved from the precursor. Ile-63 carries the isoleucine amide modification.

This sequence belongs to the conotoxin T superfamily. Contains 2 disulfide bonds that can be either 'C1-C3, C2-C4' or 'C1-C4, C2-C3', since these disulfide connectivities have been observed for conotoxins with cysteine framework V (for examples, see AC P0DQQ7 and AC P81755). Expressed by the venom duct.

The protein localises to the secreted. The sequence is that of Conotoxin Ts-011 from Conus tessulatus (Tessellate cone).